A 331-amino-acid polypeptide reads, in one-letter code: UPF0194 membrane protein YbhG (331 aa).

An N-terminal signal peptide occupies residues 1 to 19 (MKKPVVIGLAIAAIVAVIA). Residues 107-208 (EEIAQAAAAV…LDLQDTTLIA (102 aa)) are a coiled coil.

Belongs to the UPF0194 family.

The protein localises to the periplasm. The polypeptide is UPF0194 membrane protein YbhG (Salmonella paratyphi A (strain ATCC 9150 / SARB42)).